We begin with the raw amino-acid sequence, 435 residues long: Probable long-chain-alcohol O-fatty-acyltransferase 11 (435 aa).

The next 11 membrane-spanning stretches (helical) occupy residues 7-27 (NLIK…YVPT), 36-56 (FLSV…FASV), 59-79 (SGYT…LFSF), 120-140 (PIEV…SVVL), 149-169 (IYPI…LEIL), 200-220 (DFWG…DVYA), 238-258 (LGVF…FFYI), 263-283 (PTGE…AYDA), 300-320 (CLIL…WLFF), 363-383 (FFTG…IGFV), and 406-426 (FFIG…IGFV).

This sequence belongs to the wax synthase family.

The protein resides in the membrane. The enzyme catalyses a long chain fatty alcohol + a fatty acyl-CoA = a wax ester + CoA. In terms of biological role, catalyzes the final step in the synthesis of long-chain linear esters (waxes). This chain is Probable long-chain-alcohol O-fatty-acyltransferase 11, found in Arabidopsis thaliana (Mouse-ear cress).